Reading from the N-terminus, the 567-residue chain is MPSRGCSCWLLSLALLCSLAAAKEQYHEFVIRETTVKRLCKSHNIMTVNGQFPGPTLEINEGDSLIINLINRGRYNMTLHWHGVRQMRTGWSDGPEYVTQCPVRPGQSYRYRFTVAAQEGTLWWHAHSSWLRATVYGALLIRPRDGTSYPFDVQPTRELAPILLGEWWDMNPVDVVRAATRTGAAPNISDALTVNAQPGDLYSCSSHDTAVFPVTSGETNLLRFINAALNTELFVSLAGHNMTVVAADASYTKPYTTSLLLLAPGQTTDVLVTFDQPPGRYYLAARAYASAQGVPFDNTTTTAIFDYGAANNASSAAIAMPTLPAYNDTTAATAFTTNLRGLRKAELPSRVDESLFFTVGVGLFNCTNATAQQCGGPNGTRFAASINNVSFVLPSSTSILQAHHHGAPGGVFTADFPANPPVQFDYTAQNVSRALWQPVAGTKVYKLKYGSAVQVVLQGTNIFAGENHPIHLHGYDFYILAEGLGNFDAGADTGKFNVEDPPMRNTVGVPVNGWAVIRFVADNPGVWLMHCHLDVHITWGLAMAFLVDDGVGELQSLEAPPPDLPLC.

A signal peptide spans 1–22 (MPSRGCSCWLLSLALLCSLAAA). Plastocyanin-like domains are found at residues 30–146 (VIRE…PRDG) and 158–310 (ELAP…YGAA). N76 carries an N-linked (GlcNAc...) asparagine glycan. Cu cation is bound by residues H80, H82, H125, and H127. N187, N241, N298, N312, N327, N365, N368, N378, N388, and N430 each carry an N-linked (GlcNAc...) asparagine glycan. The Plastocyanin-like 3 domain occupies 415–551 (DFPANPPVQF…AMAFLVDDGV (137 aa)). 7 residues coordinate Cu cation: H468, H471, H473, H530, C531, H532, and H536.

The protein belongs to the multicopper oxidase family. Requires Cu cation as cofactor.

Its subcellular location is the secreted. The protein resides in the extracellular space. It localises to the apoplast. The enzyme catalyses 4 hydroquinone + O2 = 4 benzosemiquinone + 2 H2O. Lignin degradation and detoxification of lignin-derived products. The chain is Putative laccase-17 (LAC17) from Oryza sativa subsp. japonica (Rice).